The primary structure comprises 271 residues: Aquaporin-11 (271 aa).

Over 1–14 (MSALLGLRPEVQDT) the chain is Cytoplasmic. A helical membrane pass occupies residues 15–35 (CISLGLMLLFVLFVGLARVIA). Topologically, residues 36-41 (RQQLHR) are lumenal. Residues 42–62 (PVVHAFVLEFLATFQLCCCTH) traverse the membrane as a helical segment. Residues 63–76 (ELQVLSEQDSAHPT) lie on the Cytoplasmic side of the membrane. A helical membrane pass occupies residues 77-97 (WTLTLIYFFSLVHGLTLVGTA). Residues 98–166 (SNPCGVMMQM…NPIHTDMSKA (69 aa)) are Lumenal-facing. Positions 99–101 (NPC) match the NPC motif. Residues 167 to 187 (IIIEAICSFIFHSALLHFQEV) traverse the membrane as a helical segment. The Cytoplasmic portion of the chain corresponds to 188-194 (RTKLRIH). A helical transmembrane segment spans residues 195 to 215 (LLAALITFLAYAGGSLTGALF). Positions 216 to 218 (NPA) match the NPA motif. Topologically, residues 216 to 234 (NPALALSLHFPCFDELFYK) are lumenal. A helical membrane pass occupies residues 235 to 255 (FFVVYWLAPSVGVLMMILMFS). Topologically, residues 256–271 (FFLPWLHNNQMTNKKE) are cytoplasmic.

Belongs to the MIP/aquaporin (TC 1.A.8) family. AQP11/AQP12 subfamily. Homodimer; disulfide-linked. Homotetramer. Can also form homomultimer. Post-translationally, not glycosylated. In terms of tissue distribution, highly expressed in the S1 proximal tubule segment,. Expressed in the testis, kidney, and liver. Weakly expressed in the heart, brain, and muscle. Highly expressed in the testis. Expressed in the proximal tubule of the cortex of 8-day-old mouse kidney. Expressed in retina specifically at retinal Mueller glial cells. Expressed in brain. Expressed abundantly at the choroid plexus but also expressed weakly in the parenchyma. Expressed at the capillary endothelium in the cerebral white matter. Expressed in adult testis, in the elongated spermatids (ES) and in residual bodies inside Sertoli cells.

The protein resides in the endoplasmic reticulum membrane. The protein localises to the cytoplasmic vesicle membrane. Its subcellular location is the cell membrane. It carries out the reaction H2O(in) = H2O(out). The enzyme catalyses glycerol(in) = glycerol(out). The catalysed reaction is H2O2(out) = H2O2(in). Its function is as follows. Channel protein that facilitates the transport of water, glycerol and hydrogen peroxide across membrane of cell or organelles guaranteeing intracellular homeostasis in several organes like liver, kidney and brain. In situation of stress, participates in endoplasmic reticulum (ER) homeostasis by regulating redox homeostasis through the transport of hydrogen peroxide across the endoplasmic reticulum membrane thereby regulating the oxidative stress through the NADPH oxidase 2 pathway. Plays a role by maintaining an environment suitable for translation or protein foldings in the ER lumen namely by participating in the PKD1 glycosylation processing resulting in regulation of PKD1 membrane trafficking thereby preventing the accumulation of unfolding protein in ER. Plays a role in the proximal tubule function by regulating its endosomal acidification. May play a role in postnatal kidney development. The polypeptide is Aquaporin-11 (Mus musculus (Mouse)).